Reading from the N-terminus, the 23-residue chain is Paralytic peptide 1 (23 aa).

C7 and C19 are disulfide-bonded.

It belongs to the GBP/PSP1/paralytic peptide family. Hemolymph.

Its function is as follows. Causes rapid, rigid paralysis when injected into Lepidopteran larvae. The physiological role may be to reduce hemolymph loss following injury and promote wound healing. This is Paralytic peptide 1 from Manduca sexta (Tobacco hawkmoth).